A 94-amino-acid chain; its full sequence is Putative pterin-4-alpha-carbinolamine dehydratase (94 aa).

The protein belongs to the pterin-4-alpha-carbinolamine dehydratase family.

It carries out the reaction (4aS,6R)-4a-hydroxy-L-erythro-5,6,7,8-tetrahydrobiopterin = (6R)-L-erythro-6,7-dihydrobiopterin + H2O. The chain is Putative pterin-4-alpha-carbinolamine dehydratase from Mycobacterium sp. (strain KMS).